The sequence spans 297 residues: UBX domain-containing protein 1 (297 aa).

Ala-2 bears the N-acetylalanine mark. In terms of domain architecture, UBA spans 2-42 (AELTALESLIEMGFPRGRAEKALALTGNQGIEAAMDWLMEH). A disordered region spans residues 38-214 (WLMEHEDDPD…PPTKREYDQC (177 aa)). Residues 42–52 (HEDDPDVDEPL) are compositionally biased toward acidic residues. The tract at residues 43-297 (EDDPDVDEPL…VLIVAKKCPS (255 aa)) is interaction with BRCA1. 2 stretches are compositionally biased toward basic and acidic residues: residues 86–122 (LTEEERQEQTKRMLELVAQKQREREEREEREALEREK) and 137–177 (KLQE…ERAK). Ser-199 carries the phosphoserine modification. Ser-200 carries the phosphoserine; by MAPK12 modification. Phosphothreonine is present on residues Thr-207 and Thr-229. The region spanning 209–291 (REYDQCRIQV…GLVPSAVLIV (83 aa)) is the UBX domain. At Ser-270 the chain carries Phosphoserine.

In terms of assembly, interacts with MAVS; this interaction prevents MAVS oligomerization and thus disrupts the RLR signaling pathway. Interacts with CUL1; this interaction inhibits CUL1-mediated degradation of NF-kappa-B inhibitors. Interacts with BIRC2/c-IAP1; this interaction prevents TNFalpha-stimulated RIP1 ubiquitination and subsequent NF-kappa-B activation. Component of a complex required to couple retrotranslocation, ubiquitination and deglycosylation composed of NGLY1, SAKS1, AMFR, VCP and RAD23B. Interacts with HOMER2. Interacts directly with VCP. Interacts with BRCA1 and BARD1; interaction takes place when BRCA1 is not autoubiquitinated but is strongly enhanced in the presence of autoubiquitinated BRCA1.

Its subcellular location is the cytoplasm. Its function is as follows. Ubiquitin-binding protein that plays a role in the modulation of innate immune response. Blocks both the RIG-I-like receptors (RLR) and NF-kappa-B pathways. Following viral infection, UBXN1 is induced and recruited to the RLR component MAVS. In turn, interferes with MAVS oligomerization, and disrupts the MAVS/TRAF3/TRAF6 signalosome. This function probably serves as a brake to prevent excessive RLR signaling. Interferes with the TNFalpha-triggered NF-kappa-B pathway by interacting with cellular inhibitors of apoptosis proteins (cIAPs) and thereby inhibiting their recruitment to TNFR1. Also prevents the activation of NF-kappa-B by associating with CUL1 and thus inhibiting NF-kappa-B inhibitor alpha/NFKBIA degradation that remains bound to NF-kappa-B. Interacts with the BRCA1-BARD1 heterodimer and regulates its activity. Specifically binds 'Lys-6'-linked polyubiquitin chains. Interaction with autoubiquitinated BRCA1 leads to the inhibition of the E3 ubiquitin-protein ligase activity of the BRCA1-BARD1 heterodimer. Component of a complex required to couple deglycosylation and proteasome-mediated degradation of misfolded proteins in the endoplasmic reticulum that are retrotranslocated in the cytosol. The chain is UBX domain-containing protein 1 (Ubxn1) from Mus musculus (Mouse).